The primary structure comprises 278 residues: Elongation factor Ts (278 aa).

The tract at residues 80-83 (TDFV) is involved in Mg(2+) ion dislocation from EF-Tu.

The protein belongs to the EF-Ts family.

It is found in the cytoplasm. In terms of biological role, associates with the EF-Tu.GDP complex and induces the exchange of GDP to GTP. It remains bound to the aminoacyl-tRNA.EF-Tu.GTP complex up to the GTP hydrolysis stage on the ribosome. The sequence is that of Elongation factor Ts from Renibacterium salmoninarum (strain ATCC 33209 / DSM 20767 / JCM 11484 / NBRC 15589 / NCIMB 2235).